The sequence spans 474 residues: tRNA-2-methylthio-N(6)-dimethylallyladenosine synthase (474 aa).

The region spanning 3–120 is the MTTase N-terminal domain; the sequence is QKLHIKTWGC…LPEMINQIRG (118 aa). 6 residues coordinate [4Fe-4S] cluster: cysteine 12, cysteine 49, cysteine 83, cysteine 157, cysteine 161, and cysteine 164. The 233-residue stretch at 143 to 375 folds into the Radical SAM core domain; the sequence is RAEGPTAFVS…QQRINNQAAQ (233 aa). The TRAM domain maps to 378 to 441; the sequence is RAMLGTEQRV…TNSLRGEVVR (64 aa).

Belongs to the methylthiotransferase family. MiaB subfamily. As to quaternary structure, monomer. It depends on [4Fe-4S] cluster as a cofactor.

The protein resides in the cytoplasm. The catalysed reaction is N(6)-dimethylallyladenosine(37) in tRNA + (sulfur carrier)-SH + AH2 + 2 S-adenosyl-L-methionine = 2-methylsulfanyl-N(6)-dimethylallyladenosine(37) in tRNA + (sulfur carrier)-H + 5'-deoxyadenosine + L-methionine + A + S-adenosyl-L-homocysteine + 2 H(+). Catalyzes the methylthiolation of N6-(dimethylallyl)adenosine (i(6)A), leading to the formation of 2-methylthio-N6-(dimethylallyl)adenosine (ms(2)i(6)A) at position 37 in tRNAs that read codons beginning with uridine. This chain is tRNA-2-methylthio-N(6)-dimethylallyladenosine synthase, found in Histophilus somni (strain 129Pt) (Haemophilus somnus).